Reading from the N-terminus, the 331-residue chain is UDP-glucose 4-epimerase (331 aa).

NAD(+)-binding positions include 11-12 (YI), 31-36 (DNLITG), 51-52 (DI), 73-77 (FAAFS), N92, T117, Y141, K145, and F169. Substrate-binding residues include T117 and Y141. Y141 (proton acceptor) is an active-site residue. Residues N170, 189–190 (HI), 206–208 (QIY), R221, and 282–285 (RAGD) contribute to the substrate site.

It belongs to the NAD(P)-dependent epimerase/dehydratase family. In terms of assembly, homodimer. NAD(+) serves as cofactor.

It carries out the reaction UDP-alpha-D-glucose = UDP-alpha-D-galactose. Its pathway is carbohydrate metabolism; galactose metabolism. This is UDP-glucose 4-epimerase (galE) from Lacticaseibacillus casei (Lactobacillus casei).